The following is a 267-amino-acid chain: Matrilysin (267 aa).

The signal sequence occupies residues 1–17 (MRLTVLCAVCLLPGSLA). The propeptide at 18 to 94 (LPLPQEAGGM…PRCGVPDVAE (77 aa)) is activation peptide. The short motif at 85–92 (PRCGVPDV) is the Cysteine switch element. Cys87 is a binding site for Zn(2+). Asp153 serves as a coordination point for Ca(2+). Positions 163 and 165 each coordinate Zn(2+). Residues Asp170, Gly171, Gly173, and Thr175 each contribute to the Ca(2+) site. His178 is a binding site for Zn(2+). 3 residues coordinate Ca(2+): Gly185, Gly187, and Asp189. Zn(2+) is bound at residue His191. Residues Asp193 and Glu196 each coordinate Ca(2+). Residue His214 coordinates Zn(2+). Glu215 is a catalytic residue. Residues His218 and His224 each contribute to the Zn(2+) site.

Belongs to the peptidase M10A family. It depends on Ca(2+) as a cofactor. The cofactor is Zn(2+).

It localises to the secreted. The protein resides in the extracellular space. Its subcellular location is the extracellular matrix. It catalyses the reaction Cleavage of 14-Ala-|-Leu-15 and 16-Tyr-|-Leu-17 in B chain of insulin. No action on collagen types I, II, IV, V. Cleaves gelatin chain alpha2(I) &gt; alpha1(I).. Its function is as follows. Degrades casein, gelatins of types I, III, IV, and V, and fibronectin. Activates procollagenase. The polypeptide is Matrilysin (MMP7) (Homo sapiens (Human)).